The following is a 250-amino-acid chain: tRNA (guanine-N(7)-)-methyltransferase (250 aa).

Positions 1–10 (MTPDDPRDAS) are enriched in basic and acidic residues. Residues 1–30 (MTPDDPRDASDASLADATADSASRGHGSFF) form a disordered region. Over residues 11-24 (DASLADATADSASR) the composition is skewed to low complexity. Glu79, Glu104, Asp131, and Asp153 together coordinate S-adenosyl-L-methionine. Asp153 is an active-site residue. Residues Lys157 and Asp189 each coordinate substrate.

The protein belongs to the class I-like SAM-binding methyltransferase superfamily. TrmB family.

It catalyses the reaction guanosine(46) in tRNA + S-adenosyl-L-methionine = N(7)-methylguanosine(46) in tRNA + S-adenosyl-L-homocysteine. The protein operates within tRNA modification; N(7)-methylguanine-tRNA biosynthesis. Catalyzes the formation of N(7)-methylguanine at position 46 (m7G46) in tRNA. This Rhodopseudomonas palustris (strain BisA53) protein is tRNA (guanine-N(7)-)-methyltransferase.